Here is a 120-residue protein sequence, read N- to C-terminus: MLKFTAEHEWLKFEGDIATVGITSHAAEQLGDLVFVELPEVGATFAKDGDAATVESVKAASDVYCPLDGEVVEINQAIVDDPSLVNSDPQGAGWFFKLKLSNAADAETLLDEAAYKELIA.

The 83-residue stretch at Ile17 to Lys99 folds into the Lipoyl-binding domain. At Lys58 the chain carries N6-lipoyllysine.

Belongs to the GcvH family. As to quaternary structure, the glycine cleavage system is composed of four proteins: P, T, L and H. (R)-lipoate serves as cofactor.

Its function is as follows. The glycine cleavage system catalyzes the degradation of glycine. The H protein shuttles the methylamine group of glycine from the P protein to the T protein. The chain is Glycine cleavage system H protein from Agrobacterium fabrum (strain C58 / ATCC 33970) (Agrobacterium tumefaciens (strain C58)).